A 580-amino-acid polypeptide reads, in one-letter code: CTP synthase (580 aa).

The region spanning 304–559 (NIILVGKYVS…VAASSGCLDE (256 aa)) is the Glutamine amidotransferase type-1 domain. Catalysis depends on for GATase activity residues Cys-403, His-532, and Glu-534.

Belongs to the CTP synthase family.

The enzyme catalyses UTP + L-glutamine + ATP + H2O = CTP + L-glutamate + ADP + phosphate + 2 H(+). It participates in pyrimidine metabolism; CTP biosynthesis via de novo pathway; CTP from UDP: step 2/2. Functionally, catalyzes the ATP-dependent amination of UTP to CTP with either L-glutamine or ammonia as the source of nitrogen. The protein is CTP synthase (URA7) of Gibberella zeae (strain ATCC MYA-4620 / CBS 123657 / FGSC 9075 / NRRL 31084 / PH-1) (Wheat head blight fungus).